A 936-amino-acid polypeptide reads, in one-letter code: Protocadherin alpha-5 (936 aa).

The N-terminal stretch at methionine 1–glycine 28 is a signal peptide. Residues glutamine 29 to asparagine 696 lie on the Extracellular side of the membrane. Cadherin domains are found at residues serine 33 to phenylalanine 132, alanine 156 to phenylalanine 241, aspartate 242 to methionine 349, alanine 350 to phenylalanine 454, alanine 455 to leucine 564, and valine 580 to alanine 677. 3 N-linked (GlcNAc...) asparagine glycosylation sites follow: asparagine 264, asparagine 448, and asparagine 547. A helical membrane pass occupies residues valine 697 to tyrosine 717. Topologically, residues threonine 718–glutamine 936 are cytoplasmic. 3 disordered regions span residues serine 759–arginine 793, arginine 815–isoleucine 875, and glutamine 887–glutamine 936. 5 PXXP repeats span residues proline 773–proline 776, proline 785–proline 788, proline 818–proline 821, lysine 873–isoleucine 876, and proline 877–alanine 890. Residues proline 773–alanine 890 form a 5 X 4 AA repeats of P-X-X-P region. The span at serine 774 to arginine 786 shows a compositional bias: polar residues. A compositionally biased stretch (basic and acidic residues) spans aspartate 895 to lysine 909.

It localises to the cell membrane. Its function is as follows. Potential calcium-dependent cell-adhesion protein. May be involved in the establishment and maintenance of specific neuronal connections in the brain. The chain is Protocadherin alpha-5 (PCDHA5) from Pan troglodytes (Chimpanzee).